Here is a 139-residue protein sequence, read N- to C-terminus: Small ribosomal subunit protein uS12 (139 aa).

The tract at residues 119–139 (GVDKRRQQRSAYGAKKPKPKS) is disordered.

The protein belongs to the universal ribosomal protein uS12 family. As to quaternary structure, part of the 30S ribosomal subunit. Contacts proteins S8 and S17. May interact with IF1 in the 30S initiation complex.

In terms of biological role, with S4 and S5 plays an important role in translational accuracy. Functionally, interacts with and stabilizes bases of the 16S rRNA that are involved in tRNA selection in the A site and with the mRNA backbone. Located at the interface of the 30S and 50S subunits, it traverses the body of the 30S subunit contacting proteins on the other side and probably holding the rRNA structure together. The combined cluster of proteins S8, S12 and S17 appears to hold together the shoulder and platform of the 30S subunit. This chain is Small ribosomal subunit protein uS12, found in Mycoplasma genitalium (strain ATCC 33530 / DSM 19775 / NCTC 10195 / G37) (Mycoplasmoides genitalium).